A 444-amino-acid polypeptide reads, in one-letter code: UDP-N-acetylglucosamine 1-carboxyvinyltransferase (444 aa).

Residue 22-23 participates in phosphoenolpyruvate binding; the sequence is KN. Residue arginine 94 coordinates UDP-N-acetyl-alpha-D-glucosamine. Catalysis depends on aspartate 119, which acts as the Proton donor. Aspartate 309 and valine 331 together coordinate UDP-N-acetyl-alpha-D-glucosamine.

The protein belongs to the EPSP synthase family. MurA subfamily.

The protein localises to the cytoplasm. It catalyses the reaction phosphoenolpyruvate + UDP-N-acetyl-alpha-D-glucosamine = UDP-N-acetyl-3-O-(1-carboxyvinyl)-alpha-D-glucosamine + phosphate. It functions in the pathway cell wall biogenesis; peptidoglycan biosynthesis. Its function is as follows. Cell wall formation. Adds enolpyruvyl to UDP-N-acetylglucosamine. The sequence is that of UDP-N-acetylglucosamine 1-carboxyvinyltransferase from Chlamydia trachomatis serovar A (strain ATCC VR-571B / DSM 19440 / HAR-13).